Here is a 205-residue protein sequence, read N- to C-terminus: Retron Vc95 putative HNH endonuclease (205 aa).

In terms of biological role, putative HNH endonuclease component of antiviral defense system retron Vc95, composed of a non-coding RNA (ncRNA), a reverse transcriptase (RT), a probable ATP-binding protein and this protein. Expression of retron Vc95 confers protection against bacteriophages T2, T4 and T6. At multiplicity of infection (MOI) of 0.02 cultures slow growth when infected with T4 but do not collapse, at MOI 2 cultures enter growth stasis. This is Retron Vc95 putative HNH endonuclease from Vibrio cholerae serotype O1 biovar El Tor.